The chain runs to 268 residues: Ubiquinone/menaquinone biosynthesis C-methyltransferase UbiE (268 aa).

Residues 1 to 23 are disordered; that stretch reads MTDQHAFATEQVQLDPTLSPTTE. Residues 10–23 show a composition bias toward polar residues; the sequence is EQVQLDPTLSPTTE. S-adenosyl-L-methionine is bound by residues T91, D112, 140–141, and S157; that span reads NA.

Belongs to the class I-like SAM-binding methyltransferase superfamily. MenG/UbiE family.

The enzyme catalyses a 2-demethylmenaquinol + S-adenosyl-L-methionine = a menaquinol + S-adenosyl-L-homocysteine + H(+). The catalysed reaction is a 2-methoxy-6-(all-trans-polyprenyl)benzene-1,4-diol + S-adenosyl-L-methionine = a 5-methoxy-2-methyl-3-(all-trans-polyprenyl)benzene-1,4-diol + S-adenosyl-L-homocysteine + H(+). It participates in quinol/quinone metabolism; menaquinone biosynthesis; menaquinol from 1,4-dihydroxy-2-naphthoate: step 2/2. It functions in the pathway cofactor biosynthesis; ubiquinone biosynthesis. In terms of biological role, methyltransferase required for the conversion of demethylmenaquinol (DMKH2) to menaquinol (MKH2) and the conversion of 2-polyprenyl-6-methoxy-1,4-benzoquinol (DDMQH2) to 2-polyprenyl-3-methyl-6-methoxy-1,4-benzoquinol (DMQH2). This is Ubiquinone/menaquinone biosynthesis C-methyltransferase UbiE from Pasteurella multocida (strain Pm70).